Here is a 59-residue protein sequence, read N- to C-terminus: Large ribosomal subunit protein uL30 (59 aa).

It belongs to the universal ribosomal protein uL30 family. As to quaternary structure, part of the 50S ribosomal subunit.

This Geobacter metallireducens (strain ATCC 53774 / DSM 7210 / GS-15) protein is Large ribosomal subunit protein uL30.